The sequence spans 1320 residues: MSRRKQAKPQHLKSDEELPPQDGASEHGVPGDGAEDADSGSESRSGSEETSVCEKCCAEFFKWADFLQHKKTCTKNPLVLIVHDDEPAPPSEDFPEPSPASSPSDRTESEVAEEVAPTEGSEVKAATKEAEPMDVEVSTDKGPPGPSVPPPPPALPPQPEPAAFSMPSTNVTLETLLSTKVAVAQFSQGARAGGTTGAGGSVGAVAIPMILEQLVALQQQQIHQLQLIEQIRSQVALMSRQPGPPLKPSASAPGTASVQLQGLTPHAALQLSAGPATASAGSGSTLPAAFDGPQHLSQPASGTSTPCSTSAAPPDSGAHPACSTGPAPGAVAAASSTVGNAVQPQNASTPPALGPGPLLSSASNLPNPLLPQTSSSSVIFPNPLVSIAATANALDPLSALMKHRKGKPPNVSVFEPKASAEDPFFKHKCRFCAKVFGSDSALQIHLRSHTGERPFKCNICGNRFSTKGNLKVHFQRHKEKYPHIQMNPYPVPEYLDNVPTCSGIPYGMSLPPEKPVTTWLDSKPVLPTVPTSVGLQLPPTVPGTHNYTDSPSITPVSRSPQRPSPASSECTSLSPGLNNTESGITVRPESPQPLLGGPSLTKAEPVSLPCTSTRTGDAPVVGGQVSGLPTSAATAVTDSACTSLGSPGLPAVSDQFKAQFPFGGLLDSMQTSETSKLQQLVENIDKKMTDPNQCVICHRVLSCQSALKMHYRTHTGERPFKCKICGRAFTTKGNLKTHFGVHRAKPPLRVQHSCPICQKKFTNAVVLQQHIRMHMGGQIPNTPLPEGLQEAMDADLPFDEKNAETLSSFDDDIDENSMEEDSELKDTASDSSKPLLSYSGSCPPSPPSVISSIAALENQMKMIDSVMNCQQLANLKSVENGSGESDRLSNDSSSAVGDLESRSAGSPALSESSSSQALSPAHSNGESFRSKSPGLGHQEDPQEIPLKTERLDSPPPGPGNGGALDLTAGHPGRPLIKEEAPFSLLFLSRERGKCASTVCGVCGKPFACKSALEIHYRSHTKERRFVCTVCRRGCSTMGNLKQHLLTHKLKELPSQVFDPNFTLGPSHSTPSLASSPAPTMIKMEVNGHSKAIALGEGPALPAGVQVPTGPQTVMSPGLAPMLAPPPRRTPKQHNCQSCGKTFSSASALQIHERTHTGEKPFGCTICGRAFTTKGNLKVHMGTHMWNNAPARRGRRLSVENPMALLGGDALKFSEMFQKDLAARAMNVDPSFWNQYAAAITNGLAMKNNEISVIQNGGIPQLPVSLGGGAIPPLGAMASGVDKARTGSSPPIVSLDKASSETGASRPFARFIEDNKEIGIN.

Residues 1 to 11 are compositionally biased toward basic residues; that stretch reads MSRRKQAKPQH. The disordered stretch occupies residues 1–49; that stretch reads MSRRKQAKPQHLKSDEELPPQDGASEHGVPGDGAEDADSGSESRSGSEE. A compositionally biased stretch (low complexity) spans 40-49; that stretch reads GSESRSGSEE. The C2H2-type 1; atypical zinc-finger motif lies at 51–73; that stretch reads SVCEKCCAEFFKWADFLQHKKTC. Disordered regions lie at residues 84–166 and 271–367; these read DDEP…AFSM and LSAG…NLPN. Positions 88–100 are enriched in pro residues; sequence APPSEDFPEPSPA. Ser109 is subject to Phosphoserine. Over residues 121–131 the composition is skewed to basic and acidic residues; it reads SEVKAATKEAE. Positions 143–160 are enriched in pro residues; that stretch reads PPGPSVPPPPPALPPQPE. A compositionally biased stretch (low complexity) spans 271-289; it reads LSAGPATASAGSGSTLPAA. The span at 295-311 shows a compositional bias: polar residues; that stretch reads HLSQPASGTSTPCSTSA. Composition is skewed to low complexity over residues 323 to 342 and 355 to 367; these read STGP…GNAV and PGPL…NLPN. 2 C2H2-type zinc fingers span residues 427-449 and 455-477; these read HKCR…LRSH and FKCN…FQRH. Residues 534-623 are disordered; that stretch reads GLQLPPTVPG…RTGDAPVVGG (90 aa). Positions 543 to 554 are enriched in polar residues; it reads GTHNYTDSPSIT. Residues 555–568 are compositionally biased toward low complexity; sequence PVSRSPQRPSPASS. A compositionally biased stretch (polar residues) spans 569-583; that stretch reads ECTSLSPGLNNTESG. 3 consecutive C2H2-type zinc fingers follow at residues 692 to 714, 720 to 742, and 752 to 774; these read NQCV…YRTH, FKCK…FGVH, and HSCP…IRMH. Disordered regions lie at residues 807–846 and 878–972; these read SSFD…PPSP and VENG…GHPG. Positions 809 to 823 are enriched in acidic residues; the sequence is FDDDIDENSMEEDSE. Composition is skewed to low complexity over residues 834 to 846 and 902 to 923; these read PLLS…PPSP and RSAG…PAHS. Ser932 carries the phosphoserine modification. 4 consecutive C2H2-type zinc fingers follow at residues 997–1019, 1025–1047, 1133–1155, and 1161–1183; these read TVCG…YRSH, FVCT…LLTH, HNCQ…ERTH, and FGCT…MGTH. Ser1197 is subject to Phosphoserine.

The protein belongs to the sal C2H2-type zinc-finger protein family. In terms of tissue distribution, in adult brain, testis and kidney. In lower levels also in adult ovaries and embryonic stem cells. In embryo in developing neuroectoderm of brain, inner ear and spinal cord. Also weakly and transiently expressed in embryonic branchial arches, notochord, limb buds and heart.

Its subcellular location is the nucleus. Probable transcription factor. The chain is Sal-like protein 3 (Sall3) from Mus musculus (Mouse).